A 214-amino-acid chain; its full sequence is Riboflavin kinase (214 aa).

Residues 1–26 (MRPDGPRDPVAGPDSGPEPPYPVRLS) are disordered. Positions 44 and 46 each coordinate Mg(2+). Residue Glu116 is the Nucleophile of the active site.

The protein belongs to the flavokinase family. Zn(2+) is required as a cofactor. Mg(2+) serves as cofactor.

The enzyme catalyses riboflavin + ATP = FMN + ADP + H(+). Its pathway is cofactor biosynthesis; FMN biosynthesis; FMN from riboflavin (ATP route): step 1/1. Its function is as follows. Catalyzes the phosphorylation of riboflavin (vitamin B2) to form flavin mononucleotide (FMN) coenzyme. The chain is Riboflavin kinase (fmn1) from Aspergillus fumigatus (strain ATCC MYA-4609 / CBS 101355 / FGSC A1100 / Af293) (Neosartorya fumigata).